Reading from the N-terminus, the 355-residue chain is Methylthioribose-1-phosphate isomerase (355 aa).

Residues 50-52, Arg-93, and Gln-198 contribute to the substrate site; that span reads RGA. Catalysis depends on Asp-239, which acts as the Proton donor. Position 249–250 (249–250) interacts with substrate; sequence NK.

This sequence belongs to the eIF-2B alpha/beta/delta subunits family. MtnA subfamily. As to quaternary structure, homodimer.

The enzyme catalyses 5-(methylsulfanyl)-alpha-D-ribose 1-phosphate = 5-(methylsulfanyl)-D-ribulose 1-phosphate. It functions in the pathway amino-acid biosynthesis; L-methionine biosynthesis via salvage pathway; L-methionine from S-methyl-5-thio-alpha-D-ribose 1-phosphate: step 1/6. Catalyzes the interconversion of methylthioribose-1-phosphate (MTR-1-P) into methylthioribulose-1-phosphate (MTRu-1-P). This is Methylthioribose-1-phosphate isomerase from Geobacillus kaustophilus (strain HTA426).